Here is a 409-residue protein sequence, read N- to C-terminus: Argininosuccinate synthase (409 aa).

Residues 12-20 and Ala39 each bind ATP; that span reads AYSGGLDTS. The L-citrulline site is built by Tyr90 and Ser95. Gly120 contributes to the ATP binding site. L-aspartate contacts are provided by Thr122, Asn126, and Asp127. Asn126 is a binding site for L-citrulline. Positions 130, 181, 190, 266, and 278 each coordinate L-citrulline.

It belongs to the argininosuccinate synthase family. Type 1 subfamily. Homotetramer.

The protein resides in the cytoplasm. The enzyme catalyses L-citrulline + L-aspartate + ATP = 2-(N(omega)-L-arginino)succinate + AMP + diphosphate + H(+). Its pathway is amino-acid biosynthesis; L-arginine biosynthesis; L-arginine from L-ornithine and carbamoyl phosphate: step 2/3. The chain is Argininosuccinate synthase from Acidiphilium cryptum (strain JF-5).